Here is a 270-residue protein sequence, read N- to C-terminus: Phosphatidylglycerol--prolipoprotein diacylglyceryl transferase (270 aa).

The next 7 membrane-spanning stretches (helical) occupy residues 10–30 (VAVA…LVGI), 56–76 (LIFW…VLFY), 92–112 (WKGG…AWWF), 120–140 (FFQL…AGRI), 175–195 (SQLY…NLYA), 202–222 (MAVS…VEFV), and 237–257 (VTMG…LIWL). Arginine 139 provides a ligand contact to a 1,2-diacyl-sn-glycero-3-phospho-(1'-sn-glycerol).

The protein belongs to the Lgt family.

The protein localises to the cell inner membrane. The catalysed reaction is L-cysteinyl-[prolipoprotein] + a 1,2-diacyl-sn-glycero-3-phospho-(1'-sn-glycerol) = an S-1,2-diacyl-sn-glyceryl-L-cysteinyl-[prolipoprotein] + sn-glycerol 1-phosphate + H(+). Its pathway is protein modification; lipoprotein biosynthesis (diacylglyceryl transfer). Functionally, catalyzes the transfer of the diacylglyceryl group from phosphatidylglycerol to the sulfhydryl group of the N-terminal cysteine of a prolipoprotein, the first step in the formation of mature lipoproteins. This Pseudomonas syringae pv. syringae (strain B728a) protein is Phosphatidylglycerol--prolipoprotein diacylglyceryl transferase.